The following is a 397-amino-acid chain: 4-hydroxybenzoate polyprenyltransferase, mitochondrial (397 aa).

A mitochondrion-targeting transit peptide spans Met1 to Phe14. The next 9 helical transmembrane spans lie at Ile96–Gly116, Leu121–Ile141, Phe169–Leu189, Asn190–Met210, Val213–Trp233, Leu242–Ile262, Val289–Cys309, Leu313–Leu333, and Phe345–Leu365.

It belongs to the UbiA prenyltransferase family. Requires Mg(2+) as cofactor.

It is found in the mitochondrion inner membrane. The enzyme catalyses an all-trans-polyprenyl diphosphate + 4-hydroxybenzoate = a 4-hydroxy-3-(all-trans-polyprenyl)benzoate + diphosphate. The protein operates within cofactor biosynthesis; ubiquinone biosynthesis. Functionally, catalyzes the prenylation of para-hydroxybenzoate (PHB) with an all-trans polyprenyl group. Mediates the second step in the final reaction sequence of coenzyme Q (CoQ) biosynthesis, which is the condensation of the polyisoprenoid side chain with PHB, generating the first membrane-bound Q intermediate. The sequence is that of 4-hydroxybenzoate polyprenyltransferase, mitochondrial from Drosophila pseudoobscura pseudoobscura (Fruit fly).